A 459-amino-acid polypeptide reads, in one-letter code: Putrescine aminotransferase (459 aa).

Pyridoxal 5'-phosphate contacts are provided by residues 150 to 151 (GT) and Gln274. Lys300 is modified (N6-(pyridoxal phosphate)lysine). Thr332 is a pyridoxal 5'-phosphate binding site.

It belongs to the class-III pyridoxal-phosphate-dependent aminotransferase family. Putrescine aminotransferase subfamily. It depends on pyridoxal 5'-phosphate as a cofactor.

It catalyses the reaction an alkane-alpha,omega-diamine + 2-oxoglutarate = an omega-aminoaldehyde + L-glutamate. The catalysed reaction is putrescine + 2-oxoglutarate = 1-pyrroline + L-glutamate + H2O. It carries out the reaction cadaverine + 2-oxoglutarate = 5-aminopentanal + L-glutamate. Its pathway is amine and polyamine degradation; putrescine degradation; 4-aminobutanal from putrescine (transaminase route): step 1/1. Functionally, catalyzes the aminotransferase reaction from putrescine to 2-oxoglutarate, leading to glutamate and 4-aminobutanal, which spontaneously cyclizes to form 1-pyrroline. This is the first step in one of two pathways for putrescine degradation, where putrescine is converted into 4-aminobutanoate (gamma-aminobutyrate or GABA) via 4-aminobutanal. Also functions as a cadaverine transaminase in a a L-lysine degradation pathway to succinate that proceeds via cadaverine, glutarate and L-2-hydroxyglutarate. The polypeptide is Putrescine aminotransferase (Shigella boydii serotype 4 (strain Sb227)).